The following is a 447-amino-acid chain: N-succinylarginine dihydrolase (447 aa).

Residues 19–28 (AGLSFGNEAS), Asn110, and 137–138 (HR) each bind substrate. Glu174 is a catalytic residue. Arg212 lines the substrate pocket. His248 is a catalytic residue. 2 residues coordinate substrate: Asp250 and Asn359. Cys365 acts as the Nucleophile in catalysis.

Belongs to the succinylarginine dihydrolase family. Homodimer.

It carries out the reaction N(2)-succinyl-L-arginine + 2 H2O + 2 H(+) = N(2)-succinyl-L-ornithine + 2 NH4(+) + CO2. It participates in amino-acid degradation; L-arginine degradation via AST pathway; L-glutamate and succinate from L-arginine: step 2/5. Catalyzes the hydrolysis of N(2)-succinylarginine into N(2)-succinylornithine, ammonia and CO(2). In Salmonella typhi, this protein is N-succinylarginine dihydrolase.